Consider the following 1265-residue polypeptide: Guanine nucleotide exchange factor SDC25 (1265 aa).

One can recognise an SH3 domain in the interval 26 to 97; that stretch reads QPIDVVECTY…PPSFTRSILN (72 aa). Disordered regions lie at residues 409-454 and 623-648; these read IPAS…DTIW and LNLDNAKDKKNGSQNTDIQEEEDEYE. Over residues 416 to 428 the composition is skewed to low complexity; that stretch reads TSCSSETSHHSPS. The N-terminal Ras-GEF domain maps to 782 to 914; it reads SNNRIKGGSK…LLKEVNQKFK (133 aa). The region spanning 952–1199 is the Ras-GEF domain; it reads DPVLFATQLT…YQLSLIIEPK (248 aa). Residues 1201 to 1252 form a disordered region; it reads RKKVVPNSNSNNKSQEKSRDDQTDEGKTSTKKDRFSKFQLHKTKKKAPKVSK. Over residues 1214–1236 the composition is skewed to basic and acidic residues; it reads SQEKSRDDQTDEGKTSTKKDRFS. Residues 1239 to 1252 show a composition bias toward basic residues; it reads QLHKTKKKAPKVSK.

In terms of biological role, promotes the exchange of Ras-bound GDP by GTP. The chain is Guanine nucleotide exchange factor SDC25 (SDC25) from Saccharomyces cerevisiae (strain AWRI1631) (Baker's yeast).